Consider the following 149-residue polypeptide: 3-dehydroquinate dehydratase (149 aa).

Tyr26 serves as the catalytic Proton acceptor. Substrate is bound by residues Asn75, His81, and Asp88. The active-site Proton donor is the His101. Substrate is bound by residues 102–103 (LS) and Arg112.

It belongs to the type-II 3-dehydroquinase family. As to quaternary structure, homododecamer.

It catalyses the reaction 3-dehydroquinate = 3-dehydroshikimate + H2O. Its pathway is metabolic intermediate biosynthesis; chorismate biosynthesis; chorismate from D-erythrose 4-phosphate and phosphoenolpyruvate: step 3/7. Functionally, catalyzes a trans-dehydration via an enolate intermediate. In Shewanella woodyi (strain ATCC 51908 / MS32), this protein is 3-dehydroquinate dehydratase.